A 530-amino-acid polypeptide reads, in one-letter code: Phosphoenolpyruvate carboxykinase (ATP) (530 aa).

3 residues coordinate substrate: Arg58, Tyr195, and Lys201. ATP contacts are provided by residues Lys201, His220, and 236–244 (GLSGTGKTT). Lys201 and His220 together coordinate Mn(2+). Mn(2+) is bound at residue Asp257. Residues Glu285, Arg321, 440 to 441 (RI), and Thr446 contribute to the ATP site. Arg321 serves as a coordination point for substrate.

The protein belongs to the phosphoenolpyruvate carboxykinase (ATP) family. The cofactor is Mn(2+).

It is found in the cytoplasm. It carries out the reaction oxaloacetate + ATP = phosphoenolpyruvate + ADP + CO2. It participates in carbohydrate biosynthesis; gluconeogenesis. Its function is as follows. Involved in the gluconeogenesis. Catalyzes the conversion of oxaloacetate (OAA) to phosphoenolpyruvate (PEP) through direct phosphoryl transfer between the nucleoside triphosphate and OAA. This is Phosphoenolpyruvate carboxykinase (ATP) from Staphylococcus aureus (strain bovine RF122 / ET3-1).